We begin with the raw amino-acid sequence, 188 residues long: Kininogen (188 aa).

3 N-linked (GlcNAc...) asparagine glycosylation sites follow: N36, N150, and N182.

Post-translationally, bradykinin is released from kininogen by kallikrein. N-glycosylated. Contains O-acetylated sialic acids as terminal elements on biantennary and triantennary N-glycans.

Its function is as follows. Inhibits papain and ficin (cysteine proteinases) but not trypsin (a serine proteinase). The chain is Kininogen from Anarhichas minor (Arctic spotted wolffish).